Consider the following 327-residue polypeptide: UPF0665 family protein C23C4.06c (327 aa).

Belongs to the UPF0665 family.

It is found in the cytoplasm. The protein localises to the nucleus. The sequence is that of UPF0665 family protein C23C4.06c from Schizosaccharomyces pombe (strain 972 / ATCC 24843) (Fission yeast).